Here is a 241-residue protein sequence, read N- to C-terminus: ATP synthase subunit 4, mitochondrial (241 aa).

The transit peptide at 1–35 (MASRLARTAVGAARLRPSVVPRVLPALSTVASPRY) directs the protein to the mitochondrion.

This sequence belongs to the eukaryotic ATPase B chain family. In terms of assembly, F-type ATPases have 2 components, CF(1) - the catalytic core - and CF(0) - the membrane proton channel. In yeast, the dimeric form of ATP synthase consists of 17 polypeptides: alpha, beta, gamma, delta, epsilon, 4 (B), 5 (OSCP), 6 (A), 8, 9 (C), d, E (Tim11), f, g, h, i/j and k.

The protein localises to the mitochondrion. The protein resides in the mitochondrion inner membrane. Mitochondrial membrane ATP synthase (F(1)F(0) ATP synthase or Complex V) produces ATP from ADP in the presence of a proton gradient across the membrane which is generated by electron transport complexes of the respiratory chain. F-type ATPases consist of two structural domains, F(1) - containing the extramembraneous catalytic core, and F(0) - containing the membrane proton channel, linked together by a central stalk and a peripheral stalk. During catalysis, ATP synthesis in the catalytic domain of F(1) is coupled via a rotary mechanism of the central stalk subunits to proton translocation. Part of the complex F(0) domain and the peripheric stalk, which acts as a stator to hold the catalytic alpha(3)beta(3) subcomplex and subunit a/atp6 static relative to the rotary elements. The polypeptide is ATP synthase subunit 4, mitochondrial (atp-3) (Neurospora crassa (strain ATCC 24698 / 74-OR23-1A / CBS 708.71 / DSM 1257 / FGSC 987)).